The primary structure comprises 690 residues: Protein SPT2 homolog (690 aa).

Positions 1–579 are important for interaction with DNA; it reads MDFHNILVMA…PGHRPVFRPQ (579 aa). A coiled-coil region spans residues 40-82; that stretch reads ESAAVQAFLRRKEEEKRKKELEEKRKKERLLAKRIELKHDRKA. Disordered regions lie at residues 105–167 and 186–619; these read PKKR…APAP and EIKV…QEEI. Residues 186–228 are compositionally biased toward basic and acidic residues; the sequence is EIKVVKKIEERPRTAEELREREYLERKNKRVETQKKKSEKEVK. Residues 229 to 243 are compositionally biased toward low complexity; that stretch reads SAGISSSSKKATSLK. 2 stretches are compositionally biased toward basic and acidic residues: residues 244 to 259 and 271 to 285; these read ECAD…DKHA and TDKK…EKHS. A compositionally biased stretch (polar residues) spans 369-380; it reads HETNSSAKRPSS. Residues 383 to 396 show a composition bias toward gly residues; sequence GKGGSGHPAGGSSA. Residues 397-442 show a composition bias toward low complexity; it reads GPGRSSSNSGTGPGRPGSVSSPGPGRQGSSSAAGPGRPSSSSSLGP. Gly residues-rich tracts occupy residues 443-457, 465-477, and 489-521; these read GRLG…GRPG, GRPG…GPGR, and LGSG…GPGR. Positions 545 to 565 are enriched in polar residues; that stretch reads VSETISSKNLVTRPSNGQING. The segment at 580 to 690 is important for interaction with histones; the sequence is GIGRPPVGYK…KRQSKKLRTR (111 aa). The segment covering 593-617 has biased composition (acidic residues); sequence DDDDDDDEYDSEMDDFIEDEGEPQE. Residues 650–690 are a coiled coil; it reads REQQKEEARSLRLGVQEDLEELRREEEELKRKRQSKKLRTR.

The protein belongs to the SPT2 family. As to quaternary structure, interacts with POLR1A. Interacts with histones. Interacts with a heterotetrameric complex formed by histone H3 and H4, especially when the histone tetramer is not bound to DNA.

The protein resides in the nucleus. Its subcellular location is the nucleolus. Its function is as follows. Histone chaperone that stabilizes pre-existing histone tetramers and regulates replication-independent histone exchange on chromatin. Required for normal chromatin refolding in the coding region of transcribed genes, and for the suppression of spurious transcription. Binds DNA and histones and promotes nucleosome assembly (in vitro). Modulates RNA polymerase 1-mediated transcription. Required for optimal growth in the presence of the DNA damaging agents actinomycin D or mitomycin C (in vitro). Facilitates formation of tetrameric histone complexes containing histone H3 and H4. Modulates RNA polymerase 1-mediated transcription. Binds DNA, with a preference for branched DNA species, such as Y-form DNA and Holliday junction DNA. The sequence is that of Protein SPT2 homolog (SPTY2D1) from Gallus gallus (Chicken).